The chain runs to 1909 residues: Nck-associated protein 5 (1909 aa).

The stretch at 71–253 (EKLIHELEEE…DLEQQNRTLS (183 aa)) forms a coiled coil. Disordered stretches follow at residues 351-370 (SSYT…SQNW), 736-819 (EEDT…LMEP), 855-997 (PLFE…KKPS), 1026-1469 (SSSF…APLS), 1486-1509 (KGQV…FASW), 1541-1592 (GFGN…RTPQ), 1725-1750 (FPLP…DAEP), and 1763-1885 (SMRA…DYGD). The span at 736–748 (EEDTEKNIPKDNV) shows a compositional bias: basic and acidic residues. 4 stretches are compositionally biased toward polar residues: residues 753 to 789 (RVST…SRSS), 950 to 965 (APSS…SETA), 981 to 990 (VISSNPATTE), and 1066 to 1084 (PRIS…SKSV). Composition is skewed to low complexity over residues 1110-1131 (SPSS…HNSP) and 1178-1187 (ASKSSVAVNK). Positions 1241 to 1250 (DGRDGVDNRS) are enriched in basic and acidic residues. Polar residues predominate over residues 1300–1325 (QIITNTAERGNSLTRQNSSTESSPNK). The span at 1339 to 1366 (GRPSGHPSSGKGSLGSSGSFSSQHGSPS) shows a compositional bias: low complexity. Positions 1428–1446 (PGRTQHPSTFETSSTSKLE) are enriched in polar residues. A compositionally biased stretch (low complexity) spans 1454 to 1466 (ASATATDAVSSEA). 2 stretches are compositionally biased toward basic and acidic residues: residues 1547–1560 (LKSE…KPEL) and 1567–1576 (ELIKDTKSAD). Residues 1869-1878 (YSASGGSNSD) show a composition bias toward polar residues.

Interacts with the SH3-containing region of the adapter protein NCK. Expressed in fetal and adult brain, leukocytes and fetal fibroblasts.

This Homo sapiens (Human) protein is Nck-associated protein 5 (NCKAP5).